The primary structure comprises 346 residues: Tripartite motif-containing protein 44 (346 aa).

Residues 68–167 (TPPASGGDDA…ETEAESEFDP (100 aa)) are disordered. Acidic residues predominate over residues 89-167 (EGEVESEVGE…ETEAESEFDP (79 aa)). The segment at 176–217 (VAKRKCPDHGLDLSTYCQEDRQLICVLCPVIGAHRGHQLSTL) adopts a B box-type zinc-finger fold. Residues C181, H184, C203, and H209 each coordinate Zn(2+). Positions 292-327 (AHVTEILADIQSHMDRLMTQMAQAKEQLDTSNESAE) form a coiled coil. The disordered stretch occupies residues 313–346 (AQAKEQLDTSNESAEPKAEGDEEGPSGASEEEDT). Acidic residues predominate over residues 332–346 (GDEEGPSGASEEEDT). 2 positions are modified to phosphoserine: S338 and S341.

Interacts (via coiled coil) with TRIM17 (via coiled coil). As to expression, expressed mainly in brain with high level in cerebral hemispheres and cerebellum. Lower expression in kidney, lung and spleen. In brain is detected in the hippocampus, thalamic and pretectal nuclei, substantia nigra, the dorsal part of the medulla, the cerebellum, in the olfactory nucleus, other cortical areas apart from hippocampus and the striatum. Indeed expression is confined in neuronal somata namely in the CA3 region and dentate gyrus of the hippocampus, caudate-putamen, parabranchial nucleus, olfactory nucleus, cortex, deep cerebellar nuclei and thalamus. Also highly expressed in the spleen. thymus and testis.

In terms of biological role, may play a role in the process of differentiation and maturation of neuronal cells. May regulate the activity of TRIM17. Is a negative regulator of PAX6 expression. The chain is Tripartite motif-containing protein 44 (Trim44) from Mus musculus (Mouse).